Reading from the N-terminus, the 1071-residue chain is DNA-directed RNA polymerase subunit beta (1071 aa).

It belongs to the RNA polymerase beta chain family. As to quaternary structure, in plastids the minimal PEP RNA polymerase catalytic core is composed of four subunits: alpha, beta, beta', and beta''. When a (nuclear-encoded) sigma factor is associated with the core the holoenzyme is formed, which can initiate transcription.

The protein resides in the plastid. The protein localises to the chloroplast. The enzyme catalyses RNA(n) + a ribonucleoside 5'-triphosphate = RNA(n+1) + diphosphate. Its function is as follows. DNA-dependent RNA polymerase catalyzes the transcription of DNA into RNA using the four ribonucleoside triphosphates as substrates. This chain is DNA-directed RNA polymerase subunit beta, found in Acorus calamus (Sweet flag).